The primary structure comprises 577 residues: Protein hinderin (577 aa).

Residue Ser-21 is modified to Phosphoserine. Residues 91–167 (LKDLCLEDKR…CQELLSLYQK (77 aa)) are a coiled coil. Residue Ser-179 is modified to Phosphoserine. Positions 251–282 (TLHHPKDDLDKIPSETTTCNCESPGRKPAVPT) are disordered. The segment covering 254–263 (HPKDDLDKIP) has biased composition (basic and acidic residues). The stretch at 358-402 (LKKQISEDRKQQLMLQKMELEIEKERLQHLLAQQETKLLLKQQQL) forms a coiled coil. 3 disordered regions span residues 425-444 (SSSI…RKER), 449-492 (FHSH…GSLK), and 520-540 (LSPN…GAWN). A compositionally biased stretch (basic and acidic residues) spans 449 to 468 (FHSHMKDDAQWSCQKKDTCR). Phosphoserine occurs at positions 490 and 521.

As to quaternary structure, interacts (via N- and C-terminal domains) with SMC3 (via central hinge region). As to expression, widely expressed.

In terms of biological role, competes with SMC1 for binding to SMC3. May affect the availability of SMC3 to engage in the formation of multimeric protein complexes. The polypeptide is Protein hinderin (KIAA1328) (Homo sapiens (Human)).